Consider the following 562-residue polypeptide: Serine palmitoyltransferase 2 (562 aa).

A helical membrane pass occupies residues 61-81 (LITYLNYLILIILGHIHDFLG). The residue at position 365 (Lys-365) is an N6-(pyridoxal phosphate)lysine.

Belongs to the class-II pyridoxal-phosphate-dependent aminotransferase family. Pyridoxal 5'-phosphate is required as a cofactor.

Its subcellular location is the membrane. The catalysed reaction is L-serine + hexadecanoyl-CoA + H(+) = 3-oxosphinganine + CO2 + CoA. Its pathway is lipid metabolism; sphingolipid metabolism. In Kluyveromyces lactis (strain ATCC 8585 / CBS 2359 / DSM 70799 / NBRC 1267 / NRRL Y-1140 / WM37) (Yeast), this protein is Serine palmitoyltransferase 2 (LCB2).